Consider the following 509-residue polypeptide: Maturase K (509 aa).

This sequence belongs to the intron maturase 2 family. MatK subfamily.

It localises to the plastid. The protein localises to the chloroplast. Functionally, usually encoded in the trnK tRNA gene intron. Probably assists in splicing its own and other chloroplast group II introns. The sequence is that of Maturase K from Ibicella lutea (Yellow unicorn-plant).